The chain runs to 345 residues: Protein-glutamate methylesterase/protein-glutamine glutaminase 1 (345 aa).

The Response regulatory domain occupies 8 to 123; the sequence is SVLVIDDSAH…FEAMEALRVE (116 aa). Position 59 is a 4-aspartylphosphate (Asp-59). The 194-residue stretch at 151–344 folds into the CheB-type methylesterase domain; sequence AGEPPLVVAV…PALAALARRR (194 aa). Active-site residues include Ser-163, His-190, and Asp-286.

The protein belongs to the CheB family. Phosphorylated by CheA. Phosphorylation of the N-terminal regulatory domain activates the methylesterase activity.

The protein localises to the cytoplasm. The catalysed reaction is [protein]-L-glutamate 5-O-methyl ester + H2O = L-glutamyl-[protein] + methanol + H(+). It carries out the reaction L-glutaminyl-[protein] + H2O = L-glutamyl-[protein] + NH4(+). Its function is as follows. Involved in chemotaxis. Part of a chemotaxis signal transduction system that modulates chemotaxis in response to various stimuli. Catalyzes the demethylation of specific methylglutamate residues introduced into the chemoreceptors (methyl-accepting chemotaxis proteins or MCP) by CheR. Also mediates the irreversible deamidation of specific glutamine residues to glutamic acid. The protein is Protein-glutamate methylesterase/protein-glutamine glutaminase 1 of Myxococcus xanthus (strain DK1622).